The primary structure comprises 290 residues: Porphobilinogen deaminase (290 aa).

Cys-237 is subject to S-(dipyrrolylmethanemethyl)cysteine.

This sequence belongs to the HMBS family. In terms of assembly, monomer. Dipyrromethane serves as cofactor.

The catalysed reaction is 4 porphobilinogen + H2O = hydroxymethylbilane + 4 NH4(+). Its pathway is porphyrin-containing compound metabolism; protoporphyrin-IX biosynthesis; coproporphyrinogen-III from 5-aminolevulinate: step 2/4. In terms of biological role, tetrapolymerization of the monopyrrole PBG into the hydroxymethylbilane pre-uroporphyrinogen in several discrete steps. In Clostridium botulinum (strain Loch Maree / Type A3), this protein is Porphobilinogen deaminase.